The chain runs to 1512 residues: DNA polymerase (1512 aa).

It belongs to the DNA polymerase type-B family.

Its subcellular location is the host nucleus. The enzyme catalyses DNA(n) + a 2'-deoxyribonucleoside 5'-triphosphate = DNA(n+1) + diphosphate. The polypeptide is DNA polymerase (57/58) (Ictalurid herpesvirus 1 (strain Auburn) (IcHV-1)).